Reading from the N-terminus, the 353-residue chain is MTAILERRESESLWGRFCNWITSTENRLYIGWFGVLMIPTLLTATSVFIIAFIAAPPVDIDGIREPVSGSLLYGNNIISGAIIPTSAAIGLHFYPIWEAASVDEWLYNGGPYELIVLHFLLGVACYMGREWELSFRLGMRPWIAVAYSAPVAAATAVFLIYPIGQGSFSDGMPLGISGTFNFMIVFQAEHNILMHPFHMLGVAGVFGGSLFSAMHGSLVTSSLIRETTENESANEGYRFGQEEETYNIVAAHGYFGRLIFQYASFNNSRSLHFFLAAWPVVGIWFTALGISTMAFNLNGFNFNQSVVDSQGRVINTWADIINRANLGMEVMHERNAHNFPLDLAAMEAPSVNG.

T2 carries the post-translational modification N-acetylthreonine. T2 carries the phosphothreonine modification. The next 3 membrane-spanning stretches (helical) occupy residues 29-46, 118-133, and 142-156; these read YIGWFGVLMIPTLLTATS, HFLLGVACYMGREWEL, and WIAVAYSAPVAAATA. H118 is a chlorophyll a binding site. Residue Y126 coordinates pheophytin a. Residues D170 and E189 each contribute to the [CaMn4O5] cluster site. Residues 197–218 form a helical membrane-spanning segment; the sequence is FHMLGVAGVFGGSLFSAMHGSL. H198 contacts chlorophyll a. A quinone-binding positions include H215 and 264–265; that span reads SF. Fe cation is bound at residue H215. Residue H272 participates in Fe cation binding. Residues 274–288 traverse the membrane as a helical segment; sequence FLAAWPVVGIWFTAL. [CaMn4O5] cluster contacts are provided by H332, E333, D342, and A344. A propeptide spanning residues 345–353 is cleaved from the precursor; the sequence is AMEAPSVNG.

This sequence belongs to the reaction center PufL/M/PsbA/D family. In terms of assembly, PSII is composed of 1 copy each of membrane proteins PsbA, PsbB, PsbC, PsbD, PsbE, PsbF, PsbH, PsbI, PsbJ, PsbK, PsbL, PsbM, PsbT, PsbX, PsbY, PsbZ, Psb30/Ycf12, at least 3 peripheral proteins of the oxygen-evolving complex and a large number of cofactors. It forms dimeric complexes. Requires The D1/D2 heterodimer binds P680, chlorophylls that are the primary electron donor of PSII, and subsequent electron acceptors. It shares a non-heme iron and each subunit binds pheophytin, quinone, additional chlorophylls, carotenoids and lipids. D1 provides most of the ligands for the Mn4-Ca-O5 cluster of the oxygen-evolving complex (OEC). There is also a Cl(-1) ion associated with D1 and D2, which is required for oxygen evolution. The PSII complex binds additional chlorophylls, carotenoids and specific lipids. as cofactor. In terms of processing, tyr-161 forms a radical intermediate that is referred to as redox-active TyrZ, YZ or Y-Z. Post-translationally, C-terminally processed by CTPA; processing is essential to allow assembly of the oxygen-evolving complex and thus photosynthetic growth.

The protein localises to the plastid. Its subcellular location is the chloroplast thylakoid membrane. The enzyme catalyses 2 a plastoquinone + 4 hnu + 2 H2O = 2 a plastoquinol + O2. Functionally, photosystem II (PSII) is a light-driven water:plastoquinone oxidoreductase that uses light energy to abstract electrons from H(2)O, generating O(2) and a proton gradient subsequently used for ATP formation. It consists of a core antenna complex that captures photons, and an electron transfer chain that converts photonic excitation into a charge separation. The D1/D2 (PsbA/PsbD) reaction center heterodimer binds P680, the primary electron donor of PSII as well as several subsequent electron acceptors. This Phaseolus vulgaris (Kidney bean) protein is Photosystem II protein D1.